We begin with the raw amino-acid sequence, 401 residues long: Probable cysteine desulfurase (401 aa).

K223 carries the N6-(pyridoxal phosphate)lysine modification.

Belongs to the class-V pyridoxal-phosphate-dependent aminotransferase family. Csd subfamily. The cofactor is pyridoxal 5'-phosphate.

The enzyme catalyses (sulfur carrier)-H + L-cysteine = (sulfur carrier)-SH + L-alanine. Functionally, catalyzes the removal of elemental sulfur and selenium atoms from L-cysteine, L-cystine, L-selenocysteine, and L-selenocystine to produce L-alanine. In Pseudomonas putida (strain ATCC 47054 / DSM 6125 / CFBP 8728 / NCIMB 11950 / KT2440), this protein is Probable cysteine desulfurase (csdA).